Consider the following 802-residue polypeptide: MSEQKEIAMQVSGMTCAACAARIEKGLKRMPGVTDANVNLATETSNVIYDPAETGTAAIQEKIEKLGYHVVTEKAEFDIEGMTCAACANRIEKRLNKIEGVANAPVNFALETVTVEYNPKEASVSDLKEAVDKLGYKLKLKGEQDSEAAAKKKEERKQTARLIFSAVLSFPLLWAMVSHFTFTSFIWVPDIFLNPWMQFALATPVQFLIGWPFYVGAYKALRNKSANMDVLVALGTTAAYAYSLYLTFQSIGSHGHTDGLYYETSAILLTLILLGKLFETKAKGRSSDAIKKLMKLQAKTATVVRDGQEQIIPIDEVLVNDIVYVKPGERIPVDGEVVEGRSAVDESMITGESLPVDKNPGDSVTGSTVNANGFLKIKAVNVGKDTALSHIIKIVEEAQGSKAPIQRLADQISGIFVPIVLGIAVLTFLIWYLWAAPGDFAEAISKFIAVLVIACPCALGLATPTSIMAGSGRAAEFGILFKGGEHLEKTHRLDTIVLDKTGTVTNGKPRLTDAIPFGRFEEKDLLQFAAAAETGSEHPLGEAIIAGVKDKGLEIPKLTRFEAKVGAGILAEAGGKSILVGTRKLMESEQVEHGALLAQMEELEAEGKTVMLVSIDGEAAGLVAVADTIKDTSRKAVARLKELGLDVIMMTGDNRRTAEAIAKEAGIANIIAEVLPEQKAAEIARLQKEGRQTAMVGDGINDAPALATADIGMAIGTGTDIAMETADITLIRGDLNSIADAIRMSRLTMKNIKQNLFWALGYNSLGIPIAALGFLAPWIAGAAMAFSSVSVVLNALRLQKVK.

HMA domains follow at residues 5-71 and 73-139; these read KEIA…YHVV and EKAE…YKLK. The Cu(+) site is built by Cys16, Cys19, Cys84, and Cys87. Transmembrane regions (helical) follow at residues 162–181, 196–218, 230–249, 259–278, 412–434, and 447–469; these read LIFSAVLSFPLLWAMVSHFT, WMQFALATPVQFLIGWPFYVGAY, VLVALGTTAAYAYSLYLTFQ, GLYYETSAILLTLILLGKLF, ISGIFVPIVLGIAVLTFLIWYLW, and FIAVLVIACPCALGLATPTSIMA. Asp499 serves as the catalytic 4-aspartylphosphate intermediate. Asp698 and Asp702 together coordinate Mg(2+). The next 2 helical transmembrane spans lie at 756–775 and 779–796; these read LFWALGYNSLGIPIAALGFL and IAGAAMAFSSVSVVLNAL.

Belongs to the cation transport ATPase (P-type) (TC 3.A.3) family. Type IB subfamily. As to quaternary structure, monomer at sub-stoichiometric copper concentrations. Homodimer at higher copper concentrations. Forms a heterodimer (electrostatic interactions) with CopZ during the transfer of Cu(+).

The protein localises to the cell membrane. The enzyme catalyses Cu(+)(in) + ATP + H2O = Cu(+)(out) + ADP + phosphate + H(+). Functionally, involved in copper export. The chain is Copper-exporting P-type ATPase (copA) from Bacillus subtilis (strain 168).